Reading from the N-terminus, the 283-residue chain is Nucleoid occlusion protein (283 aa).

The tract at residues 1–26 is disordered; sequence MKQPFSRLFGFGDKQDQEMETGKQEE. The span at 13–26 shows a compositional bias: basic and acidic residues; sequence DKQDQEMETGKQEE. The H-T-H motif DNA-binding region spans 143-162; that stretch reads ESLAQRLGKGQSTIANKLRL.

The protein belongs to the ParB family.

Its subcellular location is the cytoplasm. The protein localises to the nucleoid. In terms of biological role, effects nucleoid occlusion by binding relatively nonspecifically to DNA and preventing the assembly of the division machinery in the vicinity of the nucleoid, especially under conditions that disturb the cell cycle. It helps to coordinate cell division and chromosome segregation by preventing the formation of the Z ring through the nucleoid, which would cause chromosome breakage. This is Nucleoid occlusion protein from Halalkalibacterium halodurans (strain ATCC BAA-125 / DSM 18197 / FERM 7344 / JCM 9153 / C-125) (Bacillus halodurans).